The following is a 185-amino-acid chain: MQIKSFVLAASAAATASAAACQAPTNKYFGIVAIHSGSAVQYQPFSAAKSSIFAGLNSQNASCDRPDEKSATFYIQDGSLYLYAASATPQEIFVDRSGMGQGKIGYTTGAQPAPRNSERQGWAIDSQNHLQFQGKDLIACPNSIDGAWSIWADAGVANPAGNTDCVGIAARVEDVTNPNSCVYTQ.

Residues 1–18 (MQIKSFVLAASAAATASA) form the signal peptide. Asn60 carries an N-linked (GlcNAc...) asparagine glycan.

Belongs to the phiA family.

The protein resides in the secreted. It is found in the cell wall. Its function is as follows. Cell wall protein involved in development of asexual structures such as phialide and conidium development, and thus required for spore formation. Plays a role as a general stress protectant produced by the fungus in competition with antagonistic bacteria. This Aspergillus fumigatus (strain CBS 144.89 / FGSC A1163 / CEA10) (Neosartorya fumigata) protein is Cell wall protein phiA.